The chain runs to 494 residues: UDP-N-acetylmuramoyl-L-alanyl-D-glutamate--L-lysine ligase (494 aa).

Residue serine 30 coordinates UDP-N-acetyl-alpha-D-muramoyl-L-alanyl-D-glutamate. Position 110–116 (110–116 (GTNGKTS)) interacts with ATP. Residues 152-153 (TT), serine 179, and arginine 187 each bind UDP-N-acetyl-alpha-D-muramoyl-L-alanyl-D-glutamate. Lysine 219 carries the post-translational modification N6-carboxylysine. Positions 406–409 (DNPA) match the L-lysine recognition motif motif.

The protein belongs to the MurCDEF family. MurE subfamily. Post-translationally, carboxylation is probably crucial for Mg(2+) binding and, consequently, for the gamma-phosphate positioning of ATP.

It is found in the cytoplasm. It catalyses the reaction UDP-N-acetyl-alpha-D-muramoyl-L-alanyl-D-glutamate + L-lysine + ATP = UDP-N-acetyl-alpha-D-muramoyl-L-alanyl-gamma-D-glutamyl-L-lysine + ADP + phosphate + H(+). Its pathway is cell wall biogenesis; peptidoglycan biosynthesis. Functionally, catalyzes the addition of L-lysine to the nucleotide precursor UDP-N-acetylmuramoyl-L-alanyl-D-glutamate (UMAG) in the biosynthesis of bacterial cell-wall peptidoglycan. This Staphylococcus haemolyticus (strain JCSC1435) protein is UDP-N-acetylmuramoyl-L-alanyl-D-glutamate--L-lysine ligase.